A 294-amino-acid polypeptide reads, in one-letter code: Small ribosomal subunit protein uS3 (294 aa).

A KH type-2 domain is found at 39 to 107 (VREYLKTKLK…PVAVNIEEVR (69 aa)). A disordered region spans residues 210–294 (RNDLPAVETP…AAPAADVKGE (85 aa)). Residues 219-238 (PRPDEERRPRGPRRDGRPGG) show a composition bias toward basic and acidic residues. 2 stretches are compositionally biased toward low complexity: residues 249 to 258 (RPAAGNSAPA) and 281 to 294 (VAAPAAPAADVKGE).

This sequence belongs to the universal ribosomal protein uS3 family. Part of the 30S ribosomal subunit. Forms a tight complex with proteins S10 and S14.

Its function is as follows. Binds the lower part of the 30S subunit head. Binds mRNA in the 70S ribosome, positioning it for translation. This chain is Small ribosomal subunit protein uS3, found in Verminephrobacter eiseniae (strain EF01-2).